Reading from the N-terminus, the 82-residue chain is Small ribosomal subunit protein uS17 (82 aa).

This sequence belongs to the universal ribosomal protein uS17 family. As to quaternary structure, part of the 30S ribosomal subunit.

One of the primary rRNA binding proteins, it binds specifically to the 5'-end of 16S ribosomal RNA. The sequence is that of Small ribosomal subunit protein uS17 from Phenylobacterium zucineum (strain HLK1).